We begin with the raw amino-acid sequence, 142 residues long: Translation initiation factor 2 subunit beta (142 aa).

This sequence belongs to the eIF-2-beta/eIF-5 family. Heterotrimer composed of an alpha, a beta and a gamma chain.

Functionally, eIF-2 functions in the early steps of protein synthesis by forming a ternary complex with GTP and initiator tRNA. This Thermococcus gammatolerans (strain DSM 15229 / JCM 11827 / EJ3) protein is Translation initiation factor 2 subunit beta.